The following is an 86-amino-acid chain: RNA-binding protein Hfq (86 aa).

Positions 9–69 constitute a Sm domain; the sequence is DRFLNILRTS…VSTIMPESFV (61 aa).

The protein belongs to the Hfq family. Homohexamer.

Its function is as follows. RNA chaperone that binds small regulatory RNA (sRNAs) and mRNAs to facilitate mRNA translational regulation in response to envelope stress, environmental stress and changes in metabolite concentrations. Also binds with high specificity to tRNAs. The chain is RNA-binding protein Hfq from Thermosipho melanesiensis (strain DSM 12029 / CIP 104789 / BI429).